The sequence spans 182 residues: Isopentenyl-diphosphate Delta-isomerase (182 aa).

Mn(2+)-binding residues include H25 and H32. The region spanning 30-164 (LLHLAFSSWL…PWAFSPWMVM (135 aa)) is the Nudix hydrolase domain. Residue C67 is part of the active site. Residue H69 coordinates Mn(2+). E87 lines the Mg(2+) pocket. Mn(2+) contacts are provided by E114 and E116. E116 is a catalytic residue.

This sequence belongs to the IPP isomerase type 1 family. As to quaternary structure, homodimer. The cofactor is Mg(2+). Requires Mn(2+) as cofactor.

Its subcellular location is the cytoplasm. It carries out the reaction isopentenyl diphosphate = dimethylallyl diphosphate. It functions in the pathway isoprenoid biosynthesis; dimethylallyl diphosphate biosynthesis; dimethylallyl diphosphate from isopentenyl diphosphate: step 1/1. In terms of biological role, catalyzes the 1,3-allylic rearrangement of the homoallylic substrate isopentenyl (IPP) to its highly electrophilic allylic isomer, dimethylallyl diphosphate (DMAPP). This chain is Isopentenyl-diphosphate Delta-isomerase, found in Escherichia coli (strain SMS-3-5 / SECEC).